The chain runs to 421 residues: ATP-dependent RNA helicase RhlB (421 aa).

A Q motif motif is present at residues 9-37; the sequence is QKFSDFALHPKVVEALEKKGFHNCTPIQA. Residues 40-219 form the Helicase ATP-binding domain; the sequence is LPLTLAGRDV…FEQMNNAEYI (180 aa). 53 to 60 provides a ligand contact to ATP; it reads AQTGTGKT. Positions 165–168 match the DEAD box motif; the sequence is DEAD. Residues 245-390 enclose the Helicase C-terminal domain; that stretch reads RLLQTLIEEE…VSKYNPDALM (146 aa). The segment at 392–421 is disordered; that stretch reads DLPKPLRLTRPRTGNGPRRTGAPRNRRRSG. The span at 402–414 shows a compositional bias: low complexity; it reads PRTGNGPRRTGAP.

This sequence belongs to the DEAD box helicase family. RhlB subfamily. Component of the RNA degradosome, which is a multiprotein complex involved in RNA processing and mRNA degradation.

The protein localises to the cytoplasm. The catalysed reaction is ATP + H2O = ADP + phosphate + H(+). DEAD-box RNA helicase involved in RNA degradation. Has RNA-dependent ATPase activity and unwinds double-stranded RNA. The chain is ATP-dependent RNA helicase RhlB from Escherichia coli O157:H7 (strain EC4115 / EHEC).